We begin with the raw amino-acid sequence, 461 residues long: D-phenylhydantoinase (461 aa).

3 residues coordinate a divalent metal cation: His-59, His-61, and Lys-151. Lys-151 bears the N6-carboxylysine mark. Tyr-156 lines the substrate pocket. Residues His-182 and His-239 each contribute to the a divalent metal cation site. Residue Ser-286 coordinates substrate. Residue Asp-313 participates in a divalent metal cation binding. Asn-335 contacts substrate.

Belongs to the metallo-dependent hydrolases superfamily. Hydantoinase/dihydropyrimidinase family. As to quaternary structure, homotetramer. Requires a divalent metal cation as cofactor. Post-translationally, carboxylation allows a single lysine to coordinate two divalent metal cations.

It catalyses the reaction D-5-phenylhydantoin + H2O = N-carbamoyl-D-phenylglycine + H(+). In terms of biological role, catalyzes the stereospecific hydrolysis of the cyclic amide bond of D-hydantoin derivatives with an aromatic side chains at the 5'-position. Has no activity on dihydropyrimidines. The physiological function is unknown. This chain is D-phenylhydantoinase, found in Escherichia coli (strain 55989 / EAEC).